A 558-amino-acid chain; its full sequence is 2-isopropylmalate synthase (558 aa).

The Pyruvate carboxyltransferase domain maps to 30–303 (PIWCSVDLRD…DPELDCRDIE (274 aa)). Mg(2+)-binding residues include Asp-39, His-242, His-244, and Asn-278. A regulatory domain region spans residues 437 to 558 (QPNARIKFVD…ANRVLEERAK (122 aa)).

It belongs to the alpha-IPM synthase/homocitrate synthase family. LeuA type 2 subfamily. In terms of assembly, homodimer. The cofactor is Mg(2+).

It localises to the cytoplasm. It carries out the reaction 3-methyl-2-oxobutanoate + acetyl-CoA + H2O = (2S)-2-isopropylmalate + CoA + H(+). It functions in the pathway amino-acid biosynthesis; L-leucine biosynthesis; L-leucine from 3-methyl-2-oxobutanoate: step 1/4. Functionally, catalyzes the condensation of the acetyl group of acetyl-CoA with 3-methyl-2-oxobutanoate (2-ketoisovalerate) to form 3-carboxy-3-hydroxy-4-methylpentanoate (2-isopropylmalate). This is 2-isopropylmalate synthase from Agrobacterium fabrum (strain C58 / ATCC 33970) (Agrobacterium tumefaciens (strain C58)).